The sequence spans 348 residues: Phospho-2-dehydro-3-deoxyheptonate aldolase, Trp-sensitive (348 aa).

It belongs to the class-I DAHP synthase family.

It carries out the reaction D-erythrose 4-phosphate + phosphoenolpyruvate + H2O = 7-phospho-2-dehydro-3-deoxy-D-arabino-heptonate + phosphate. Its pathway is metabolic intermediate biosynthesis; chorismate biosynthesis; chorismate from D-erythrose 4-phosphate and phosphoenolpyruvate: step 1/7. Its function is as follows. Stereospecific condensation of phosphoenolpyruvate (PEP) and D-erythrose-4-phosphate (E4P) giving rise to 3-deoxy-D-arabino-heptulosonate-7-phosphate (DAHP). The chain is Phospho-2-dehydro-3-deoxyheptonate aldolase, Trp-sensitive (aroH) from Buchnera aphidicola subsp. Schizaphis graminum (strain Sg).